The primary structure comprises 171 residues: Adenine phosphoribosyltransferase (171 aa).

The protein belongs to the purine/pyrimidine phosphoribosyltransferase family. In terms of assembly, homodimer.

Its subcellular location is the cytoplasm. The enzyme catalyses AMP + diphosphate = 5-phospho-alpha-D-ribose 1-diphosphate + adenine. Its pathway is purine metabolism; AMP biosynthesis via salvage pathway; AMP from adenine: step 1/1. Catalyzes a salvage reaction resulting in the formation of AMP, that is energically less costly than de novo synthesis. This is Adenine phosphoribosyltransferase from Mycoplasmopsis fermentans (strain ATCC 19989 / NBRC 14854 / NCTC 10117 / PG18) (Mycoplasma fermentans).